The following is a 184-amino-acid chain: dCTP deaminase (184 aa).

DCTP is bound by residues 107–112 (KSTYAR), 131–133 (TLE), Gln-152, Tyr-166, and Gln-176. Glu-133 functions as the Proton donor/acceptor in the catalytic mechanism.

This sequence belongs to the dCTP deaminase family. Homotrimer.

It catalyses the reaction dCTP + H2O + H(+) = dUTP + NH4(+). It participates in pyrimidine metabolism; dUMP biosynthesis; dUMP from dCTP (dUTP route): step 1/2. Its function is as follows. Catalyzes the deamination of dCTP to dUTP. The chain is dCTP deaminase from Paramagnetospirillum magneticum (strain ATCC 700264 / AMB-1) (Magnetospirillum magneticum).